The primary structure comprises 83 residues: uncharacterized protein (83 aa).

This sequence belongs to the BolA/IbaG family.

This is an uncharacterized protein from Acinetobacter guillouiae (Acinetobacter genomosp. 11).